A 202-amino-acid polypeptide reads, in one-letter code: Coiled-coil domain-containing protein 69 (202 aa).

Over residues 1–11 (MGCRQSRHSRG) the composition is skewed to basic residues. Disordered stretches follow at residues 1 to 20 (MGCR…VEET) and 32 to 52 (GRIL…SNAQ). Glycine 2 carries N-myristoyl glycine lipidation. Residues 32–42 (GRILEGRHEEA) are compositionally biased toward basic and acidic residues. Serine 92 is modified (phosphoserine). Residues 112 to 146 (WEQELESLHHVIEMKNERIHELEKQLFLLEMLKEK) adopt a coiled-coil conformation.

The protein belongs to the CCDC69 family.

It is found in the cytoplasm. It localises to the cytoskeleton. Its subcellular location is the spindle. The protein resides in the midbody. May act as a scaffold to regulate the recruitment and assembly of spindle midzone components. Required for the localization of AURKB and PLK1 to the spindle midzone. This is Coiled-coil domain-containing protein 69 (Ccdc69) from Mus musculus (Mouse).